A 446-amino-acid chain; its full sequence is 3-phosphoshikimate 1-carboxyvinyltransferase (446 aa).

Positions 1 to 20 (MSTWPAPSTATPVHATVTVP) are disordered. Lys23, Ser24, and Arg28 together coordinate 3-phosphoshikimate. Lys23 serves as a coordination point for phosphoenolpyruvate. Phosphoenolpyruvate is bound by residues Gly100 and Arg128. 3-phosphoshikimate contacts are provided by Ser171, Ser172, Gln173, Ser200, Glu315, and His344. Gln173 provides a ligand contact to phosphoenolpyruvate. Catalysis depends on Glu315, which acts as the Proton acceptor. The phosphoenolpyruvate site is built by Arg348, Arg389, and Lys414.

Belongs to the EPSP synthase family. As to quaternary structure, monomer.

It is found in the cytoplasm. The catalysed reaction is 3-phosphoshikimate + phosphoenolpyruvate = 5-O-(1-carboxyvinyl)-3-phosphoshikimate + phosphate. It participates in metabolic intermediate biosynthesis; chorismate biosynthesis; chorismate from D-erythrose 4-phosphate and phosphoenolpyruvate: step 6/7. Its function is as follows. Catalyzes the transfer of the enolpyruvyl moiety of phosphoenolpyruvate (PEP) to the 5-hydroxyl of shikimate-3-phosphate (S3P) to produce enolpyruvyl shikimate-3-phosphate and inorganic phosphate. This Mycolicibacterium vanbaalenii (strain DSM 7251 / JCM 13017 / BCRC 16820 / KCTC 9966 / NRRL B-24157 / PYR-1) (Mycobacterium vanbaalenii) protein is 3-phosphoshikimate 1-carboxyvinyltransferase.